Reading from the N-terminus, the 313-residue chain is MRLVTLAPAKVNLVLRVGPVRADGYHDLRTLMVPLDLGDRVDVRVSARPGPVRCTVPGRPELDGPENLAARAAEAFRRRFGVDRAVSIRIEKRTPVTAGLGGGSSDAAAVLRCLARALRVRDGAALAALALEIGSDVPFFLGPGPAWAAGRGERLSRAEVPPLDLVLVYPADPSLAIRAGDAYRWLDEARASGSQAPRRLGRPGRWRPTLLGNDLQAPCVARKPALQALLGLLVGAGATAAIMSGSGPTVFGIFPGRGAARGAALAIQGRAKGGAAGVQVLLARTVRRHPRVSPWRSPRSASSRSTRRSSRPT.

K10 is a catalytic residue. P95–S105 contacts ATP. Residue D136 is part of the active site. The segment at H289–T313 is disordered. Residues V292–R304 show a composition bias toward low complexity.

Belongs to the GHMP kinase family. IspE subfamily.

It carries out the reaction 4-CDP-2-C-methyl-D-erythritol + ATP = 4-CDP-2-C-methyl-D-erythritol 2-phosphate + ADP + H(+). It participates in isoprenoid biosynthesis; isopentenyl diphosphate biosynthesis via DXP pathway; isopentenyl diphosphate from 1-deoxy-D-xylulose 5-phosphate: step 3/6. Catalyzes the phosphorylation of the position 2 hydroxy group of 4-diphosphocytidyl-2C-methyl-D-erythritol. The polypeptide is 4-diphosphocytidyl-2-C-methyl-D-erythritol kinase (Anaeromyxobacter sp. (strain K)).